The following is a 755-amino-acid chain: Protein phosphatase 1E (755 aa).

The disordered stretch occupies residues 21–131; the sequence is EFRGPCGGGE…PPLPPLPRPL (111 aa). A run of 7 repeats spans residues 31-32, 33-34, 35-36, 37-38, 39-40, 41-42, and 43-44. Residues 31–52 are 11 X 2 AA tandem repeats of P-E; that stretch reads PEPEPEPEPEPEPESEPEPEPE. Acidic residues-rich tracts occupy residues 31-68 and 77-101; these read PEPE…EPGE and EEGD…EEEG. Residues 45–46 form an 8; approximate repeat; it reads SE. 3 tandem repeats follow at residues 47-48, 49-50, and 51-52. Low complexity predominate over residues 102–113; sequence AATAAAAPGHSA. Residues 114 to 129 show a composition bias toward pro residues; that stretch reads VPPPPPQLPPLPPLPR. The PPM-type phosphatase domain occupies 231-488; the sequence is ETSIHAIKNM…DNITVIVVFL (258 aa). Residues Asp-273, Gly-274, Asp-435, and Asp-479 each contribute to the Mn(2+) site. A disordered region spans residues 498–537; sequence SEESDWTENSFQGGQEDGGDDKENHGECKRPWPQHQCSAP. A compositionally biased stretch (basic and acidic residues) spans 518–527; that stretch reads DKENHGECKR. Phosphoserine is present on residues Ser-535 and Ser-548.

Belongs to the PP2C family. Heterotrimer. Interacts with PAX1 and ARHGEF6 (or ARHGEF7). Mg(2+) serves as cofactor. The cofactor is Mn(2+).

Its subcellular location is the nucleus. It localises to the cytoplasm. It carries out the reaction O-phospho-L-seryl-[protein] + H2O = L-seryl-[protein] + phosphate. The catalysed reaction is O-phospho-L-threonyl-[protein] + H2O = L-threonyl-[protein] + phosphate. Its function is as follows. Protein phosphatase that inactivates multifunctional CaM kinases such as CAMK4 and CAMK2. Dephosphorylates and inactivates PAK. May play a role in the inhibition of actin fiber stress breakdown and in morphological changes driven by TNK2/CDC42. Dephosphorylates PRKAA2. This Homo sapiens (Human) protein is Protein phosphatase 1E (PPM1E).